A 202-amino-acid polypeptide reads, in one-letter code: Cytochrome c oxidase assembly protein CtaG (202 aa).

Over 1-13 (MSDKAAAPKKQGR) the chain is Cytoplasmic. The chain crosses the membrane as a helical; Signal-anchor for type II membrane protein span at residues 14–36 (NNGAVVLMCLSFVFGMGAMSYAA). At 37-202 (VPLYRIFCQV…GGAEKVEKKL (166 aa)) the chain is on the periplasmic side. A disordered region spans residues 183–202 (EGPKPLASNEGGAEKVEKKL).

The protein belongs to the COX11/CtaG family.

It is found in the cell inner membrane. In terms of biological role, exerts its effect at some terminal stage of cytochrome c oxidase synthesis, probably by being involved in the insertion of the copper B into subunit I. The protein is Cytochrome c oxidase assembly protein CtaG of Rhizobium etli (strain CIAT 652).